The primary structure comprises 347 residues: Probable dual-specificity RNA methyltransferase RlmN (347 aa).

Glu91 acts as the Proton acceptor in catalysis. Residues Tyr97–Asp327 enclose the Radical SAM core domain. A disulfide bridge links Cys104 with Cys332. [4Fe-4S] cluster contacts are provided by Cys111, Cys115, and Cys118. Residues Gly158 to Glu159, Ser190, Ser213 to His215, and Asn289 each bind S-adenosyl-L-methionine. The S-methylcysteine intermediate role is filled by Cys332.

Belongs to the radical SAM superfamily. RlmN family. The cofactor is [4Fe-4S] cluster.

It is found in the cytoplasm. It catalyses the reaction adenosine(2503) in 23S rRNA + 2 reduced [2Fe-2S]-[ferredoxin] + 2 S-adenosyl-L-methionine = 2-methyladenosine(2503) in 23S rRNA + 5'-deoxyadenosine + L-methionine + 2 oxidized [2Fe-2S]-[ferredoxin] + S-adenosyl-L-homocysteine. The enzyme catalyses adenosine(37) in tRNA + 2 reduced [2Fe-2S]-[ferredoxin] + 2 S-adenosyl-L-methionine = 2-methyladenosine(37) in tRNA + 5'-deoxyadenosine + L-methionine + 2 oxidized [2Fe-2S]-[ferredoxin] + S-adenosyl-L-homocysteine. Specifically methylates position 2 of adenine 2503 in 23S rRNA and position 2 of adenine 37 in tRNAs. This Clostridium perfringens (strain 13 / Type A) protein is Probable dual-specificity RNA methyltransferase RlmN.